A 318-amino-acid polypeptide reads, in one-letter code: Type II restriction enzyme HaeIII (318 aa).

The enzyme catalyses Endonucleolytic cleavage of DNA to give specific double-stranded fragments with terminal 5'-phosphates.. Functionally, a P subtype restriction enzyme that recognizes the double-stranded sequence 5'-GGCC-3' and cleaves after G-2. The polypeptide is Type II restriction enzyme HaeIII (haeIIIR) (Haemophilus aegyptius).